The sequence spans 587 residues: 5-aminolevulinate synthase, erythroid-specific, mitochondrial (587 aa).

The transit peptide at 1 to 49 (MVTAAMLLQCCPVPARGPTSLLGKVVKTHQFLFGIGRCPILATQGPNCS) directs the protein to the mitochondrion. A succinyl-CoA-binding site is contributed by arginine 163. Pyridoxal 5'-phosphate contacts are provided by cysteine 258 and phenylalanine 259. The succinyl-CoA site is built by serine 280 and lysine 299. Pyridoxal 5'-phosphate is bound by residues serine 332, histidine 360, and threonine 388. Residue lysine 391 is part of the active site. The residue at position 391 (lysine 391) is an N6-(pyridoxal phosphate)lysine. Pyridoxal 5'-phosphate is bound by residues threonine 420 and threonine 421. Threonine 508 lines the succinyl-CoA pocket.

The protein belongs to the class-II pyridoxal-phosphate-dependent aminotransferase family. As to quaternary structure, homodimer. Interacts with SUCLA2. Requires pyridoxal 5'-phosphate as cofactor.

The protein resides in the mitochondrion inner membrane. The catalysed reaction is succinyl-CoA + glycine + H(+) = 5-aminolevulinate + CO2 + CoA. Its pathway is porphyrin-containing compound metabolism; protoporphyrin-IX biosynthesis; 5-aminolevulinate from glycine: step 1/1. Its function is as follows. Catalyzes the pyridoxal 5'-phosphate (PLP)-dependent condensation of succinyl-CoA and glycine to form aminolevulinic acid (ALA), with CoA and CO2 as by-products. Contributes significantly to heme formation during erythropoiesis. This is 5-aminolevulinate synthase, erythroid-specific, mitochondrial (ALAS2) from Pongo abelii (Sumatran orangutan).